The primary structure comprises 274 residues: Serine acetyltransferase (274 aa).

This sequence belongs to the transferase hexapeptide repeat family.

Its subcellular location is the cytoplasm. The enzyme catalyses L-serine + acetyl-CoA = O-acetyl-L-serine + CoA. The protein operates within amino-acid biosynthesis; L-cysteine biosynthesis; L-cysteine from L-serine: step 1/2. This chain is Serine acetyltransferase (cysE), found in Buchnera aphidicola subsp. Acyrthosiphon pisum (strain APS) (Acyrthosiphon pisum symbiotic bacterium).